A 942-amino-acid chain; its full sequence is PH and SEC7 domain-containing protein C11E3.11c (942 aa).

Over residues Met1–Ser18 the composition is skewed to polar residues. Disordered regions lie at residues Met1–Asn128 and Ser259–Arg308. Low complexity predominate over residues Pro24–Pro40. Composition is skewed to polar residues over residues Trp50–Pro60, Ala90–Thr125, Tyr271–Tyr284, and Asn292–Glu305. One can recognise an SEC7 domain in the interval Ser295–Asn497. The region spanning Pro681 to Ala804 is the PH domain.

The polypeptide is PH and SEC7 domain-containing protein C11E3.11c (Schizosaccharomyces pombe (strain 972 / ATCC 24843) (Fission yeast)).